The chain runs to 411 residues: Glutamate dehydrogenase 2, mitochondrial (411 aa).

Residues 1 to 18 constitute a mitochondrion transit peptide; it reads MNALAATSRNFRQAARLL. K102 is an active-site residue.

The protein belongs to the Glu/Leu/Phe/Val dehydrogenases family. As to expression, expressed in roots. Expressed ubiquitously in various tissues.

Its subcellular location is the mitochondrion. It catalyses the reaction L-glutamate + NAD(+) + H2O = 2-oxoglutarate + NH4(+) + NADH + H(+). It carries out the reaction L-glutamate + NADP(+) + H2O = 2-oxoglutarate + NH4(+) + NADPH + H(+). In Oryza sativa subsp. japonica (Rice), this protein is Glutamate dehydrogenase 2, mitochondrial (GDH2).